The sequence spans 125 residues: Large ribosomal subunit protein bL12 (125 aa).

Belongs to the bacterial ribosomal protein bL12 family. Homodimer. Part of the ribosomal stalk of the 50S ribosomal subunit. Forms a multimeric L10(L12)X complex, where L10 forms an elongated spine to which 2 to 4 L12 dimers bind in a sequential fashion. Binds GTP-bound translation factors.

In terms of biological role, forms part of the ribosomal stalk which helps the ribosome interact with GTP-bound translation factors. Is thus essential for accurate translation. The polypeptide is Large ribosomal subunit protein bL12 (Porphyromonas gingivalis (strain ATCC 33277 / DSM 20709 / CIP 103683 / JCM 12257 / NCTC 11834 / 2561)).